A 65-amino-acid chain; its full sequence is uncharacterized protein (65 aa).

This is an uncharacterized protein from Mycobacterium tuberculosis (strain ATCC 25618 / H37Rv).